Consider the following 387-residue polypeptide: MAESSKVFKKSSGDGKLAIYLAKRDYVDHVDHVEPVDGMIIIDPEYQKDKKVFVTLACTFRYGRDDHELIGLSFKKELCFLHCQVYPPLPEDKKPLTPLQEKLSKKLGVNAFPFCFNMTTDLPCSVTLQPGPEDTGKKCGVDFEVKGFWADNVEEKISRKNSVQLIIRKVQFAPEATGTASCVQTTRQFMMSDKPLQVEVSLDKEVYYHGEPVGIKLKINNNTSKIVKKIKITVEQLTDVVLYSLDKYTKIVCCEEINETVAANANFSGSYSLTPLLANNKEKRGLALDGKLKHGDTNLASSTILRPGMDKEVLGMLVSYKVRVSLVVARGGILGDLTSSDVSVELPFTLMHPKPSPDQTNIEDVVIEEFARQKLQGAEGEDDKDDA.

It belongs to the arrestin family. As to expression, retina and pineal gland.

Its function is as follows. May play a role in an as yet undefined retina-specific signal transduction. Could bind to photoactivated-phosphorylated red/green opsins. This Xenopus laevis (African clawed frog) protein is Arrestin-C (arr3).